We begin with the raw amino-acid sequence, 911 residues long: Golgin IMH1 (911 aa).

Disordered stretches follow at residues 16 to 41 (LAKGLADDMSPTPSEQQIEDDKSGLP) and 271 to 314 (KELP…ETVD). Residues 101 to 280 (FFQDLNNKNN…KELPKAISHQ (180 aa)) adopt a coiled-coil conformation. Over residues 286–299 (NRRKKNRNKGKKNK) the composition is skewed to basic residues. 2 positions are modified to phosphoserine: S308 and S660. Coiled-coil stretches lie at residues 312 to 735 (TVDN…ALKH) and 766 to 814 (SKAD…KERQ). The disordered stretch occupies residues 814-850 (QYSDKSGRVSRSGSIGTLANANIDSSPANNSNPTKLE). Residues 822 to 847 (VSRSGSIGTLANANIDSSPANNSNPT) show a composition bias toward polar residues. S827 is subject to Phosphoserine. T830 is subject to Phosphothreonine. In terms of domain architecture, GRIP spans 861-909 (DSEKNEKIAYIKNVLLGFLEHKEQRNQLLPVISMLLQLDSTDEKRLVMS).

Forms oligomers and is present in high-molecular-mass complexes. Interacts with ARL1.

It localises to the cytoplasm. The protein resides in the golgi apparatus membrane. Its function is as follows. Involved in vesicular transport between an endosomal compartment and the Golgi apparatus. This chain is Golgin IMH1 (IMH1), found in Saccharomyces cerevisiae (strain ATCC 204508 / S288c) (Baker's yeast).